Reading from the N-terminus, the 1360-residue chain is DNA-directed RNA polymerase subunit beta (1360 aa).

This sequence belongs to the RNA polymerase beta chain family. The RNAP catalytic core consists of 2 alpha, 1 beta, 1 beta' and 1 omega subunit. When a sigma factor is associated with the core the holoenzyme is formed, which can initiate transcription.

The catalysed reaction is RNA(n) + a ribonucleoside 5'-triphosphate = RNA(n+1) + diphosphate. In terms of biological role, DNA-dependent RNA polymerase catalyzes the transcription of DNA into RNA using the four ribonucleoside triphosphates as substrates. The protein is DNA-directed RNA polymerase subunit beta of Teredinibacter turnerae (strain ATCC 39867 / T7901).